The primary structure comprises 158 residues: Transcription elongation factor GreA (158 aa).

Residues 10–76 (TLEGKKKLEE…QIEKMIRNAE (67 aa)) adopt a coiled-coil conformation.

This sequence belongs to the GreA/GreB family.

Necessary for efficient RNA polymerase transcription elongation past template-encoded arresting sites. The arresting sites in DNA have the property of trapping a certain fraction of elongating RNA polymerases that pass through, resulting in locked ternary complexes. Cleavage of the nascent transcript by cleavage factors such as GreA or GreB allows the resumption of elongation from the new 3'terminus. GreA releases sequences of 2 to 3 nucleotides. In Halalkalibacterium halodurans (strain ATCC BAA-125 / DSM 18197 / FERM 7344 / JCM 9153 / C-125) (Bacillus halodurans), this protein is Transcription elongation factor GreA.